The chain runs to 945 residues: Chaperone protein ClpD, chloroplastic (945 aa).

A chloroplast-targeting transit peptide spans 1-89; it reads MEVLSTSSPL…FERFTERAIR (89 aa). 2 repeat regions span residues 90–146 and 168–233; these read AIIF…WDEA and FSIS…LKGE. In terms of domain architecture, Clp R spans 90 to 233; it reads AIIFSQKEAK…AAALTRLKGE (144 aa). The disordered stretch occupies residues 233–264; it reads EIAKDGREPSSSSKGSFESPPSGRIAGSGPGG. A compositionally biased stretch (low complexity) spans 241–255; the sequence is PSSSSKGSFESPPSG. The interval 271 to 523 is i; sequence LEQFCVDLTA…RARIEAFRKK (253 aa). 316–323 contributes to the ATP binding site; the sequence is GEAGVGKT. Residues 555–586 form a disordered region; the sequence is SRQKQDDGDAISDESGELVEESSLPPAAGDDE. Acidic residues predominate over residues 562 to 574; that stretch reads GDAISDESGELVE. The II stretch occupies residues 590-781; sequence VGPDDIAAVA…LIIMTSNVGS (192 aa). ATP is bound at residue 664–671; that stretch reads GPTGVGKT.

It belongs to the ClpA/ClpB family. ClpD subfamily. In terms of assembly, homodimer and homohexamer. Hexamerization upon addition of ATP. Interacts with CLPT1. Stably associated with the import machinery. Mg(2+) is required as a cofactor. As to expression, expressed in stems and leaves.

Its subcellular location is the plastid. The protein resides in the chloroplast stroma. It carries out the reaction ATP + H2O = ADP + phosphate + H(+). Its function is as follows. Molecular chaperone that interact with a ClpP-like protease involved in degradation of denatured proteins in the chloroplast. The ATPase activity of CLPD is stimulated by CLPT1. Has no ADPase activity. Interacts with transit peptides with a positional preference. Localization of the signal sequence at the N-terminal end of a protein seems mandatory for interaction to take place. This Arabidopsis thaliana (Mouse-ear cress) protein is Chaperone protein ClpD, chloroplastic.